Reading from the N-terminus, the 354-residue chain is Probable alcohol acetyltransferase (354 aa).

Catalysis depends on charge relay system residues Ser-124 and His-293.

The protein belongs to the AB hydrolase superfamily.

Its function is as follows. Probable alcohol acetyltransferase that uses acetyl-CoA to synthesize acetate esters from various alcohols. Not involved in the synthesis of ethyl acetate. This is Probable alcohol acetyltransferase (EAT2) from Cyberlindnera jadinii (strain ATCC 18201 / CBS 1600 / BCRC 20928 / JCM 3617 / NBRC 0987 / NRRL Y-1542) (Torula yeast).